Here is a 150-residue protein sequence, read N- to C-terminus: UPF0756 membrane protein NT05HA_0561 (150 aa).

Transmembrane regions (helical) follow at residues 1–21, 52–72, 81–101, and 128–148; these read MSLQ…LGIF, YGLS…LVSG, AFVS…AWLA, and FLGG…VLIG.

It belongs to the UPF0756 family.

Its subcellular location is the cell membrane. This is UPF0756 membrane protein NT05HA_0561 from Aggregatibacter aphrophilus (strain NJ8700) (Haemophilus aphrophilus).